The primary structure comprises 106 residues: MSRVYKIKNLEEARNFLYSIEEPLILTNDDSSIKYYGMLVIDYMFKTLRREFPEKVLALTVNVGQDHAALFTAIKLGYKNIVYIGASAEAKRLLSDLYNNPITYKV.

This is an uncharacterized protein from Rickettsia prowazekii (strain Madrid E).